Reading from the N-terminus, the 72-residue chain is Hypotensin-1 (72 aa).

The N-terminal stretch at 1-24 (MKMMIPVIFSILLLIFSLSSTAMS) is a signal peptide. A propeptide spanning residues 25–35 (LEDEQENMEER) is cleaved from the precursor. The residue at position 41 (S41) is a Phosphoserine. Residues 53–72 (ETNAKPPARFDPAAFEKSDD) are disordered. The propeptide occupies 61 to 72 (RFDPAAFEKSDD).

This sequence belongs to the non-disulfide-bridged peptide (NDBP) superfamily. In terms of processing, undergoes enzymatic cleavages by carboxypeptidases, endopeptidases, and aminopeptidases resulting in at least 46 fragments of this protein. In terms of tissue distribution, expressed by the venom gland.

The protein resides in the secreted. In terms of biological role, agonist of the B2 bradykinin receptor (BDKRB2). Potentiates the hypotensive effect of bradykinin (BK) and induces a direct vasorelaxing effect independent of BK, by endothelium- and nitric oxide (NO)-dependent mechanisms in rat aortic ring preparations. Also exerts proangiogenic, antiinflammatory, and antifibrogenic activities. Does not inhibit the angiotensin-converting enzyme (ACE) but increases its activity, and inhibits neprilysin (NEP) in a non-competitive manner. Exerts intermediate cytotoxicity and pro-inflammatory effects on mouse macrophages, and increases the phagocytic activity of these murine cells. Its function is as follows. Presents moderate hemolytic activity at physiological concentrations (micromolar range). Does not induce mast cell degranulation, lactate dehydrogenase (LDH) release from mast cells and antimicrobial effects. In vivo, causes intense pain (but no edema formation), when injected in mice hind paws. Also induces discomfort and anxiety in mice, as it moderately diminishes locomotion and moderately increases rearing behavior. In Tityus serrulatus (Brazilian scorpion), this protein is Hypotensin-1.